Consider the following 854-residue polypeptide: Golgin subfamily A member 6-like protein 22 (854 aa).

Disordered regions lie at residues 1 to 114 (MLMW…HQEA), 320 to 348 (QEEK…MRRQ), 366 to 447 (MHEQ…MWRQ), 481 to 568 (QEEK…MWRQ), 581 to 681 (RQEE…EQEE), and 714 to 854 (QEEK…MQEH). Residues 15–35 (LPTHPHLPTHPHLPTHPHLPT) show a composition bias toward basic residues. Residues 45-66 (MSKETRQSKLAEAKEQLTDHHP) are compositionally biased toward basic and acidic residues. 2 stretches are compositionally biased toward polar residues: residues 67-77 (QTNPSVGTAAS) and 85-97 (NNGT…TSGG). Positions 100–114 (SPEDEQKASHQHQEA) are enriched in basic and acidic residues. Positions 103–854 (DEQKASHQHQ…RQQEEKMQEH (752 aa)) form a coiled coil.

Belongs to the GOLGA6 family.

The chain is Golgin subfamily A member 6-like protein 22 from Homo sapiens (Human).